The chain runs to 441 residues: GTPase Der (441 aa).

2 consecutive EngA-type G domains span residues 2–164 and 173–343; these read QKVA…PADE and IRIS…EKWQ. GTP is bound by residues 8-15, 55-59, 116-119, 179-186, 226-230, and 288-291; these read GRPNVGKS, DTGGL, NKID, DTAGI, and NKWD. Residues 344–428 enclose the KH-like domain; it reads SRIPTAELNR…PVRLKWKEKG (85 aa).

This sequence belongs to the TRAFAC class TrmE-Era-EngA-EngB-Septin-like GTPase superfamily. EngA (Der) GTPase family. Associates with the 50S ribosomal subunit.

Its function is as follows. GTPase that plays an essential role in the late steps of ribosome biogenesis. This chain is GTPase Der, found in Deinococcus geothermalis (strain DSM 11300 / CIP 105573 / AG-3a).